A 262-amino-acid polypeptide reads, in one-letter code: Glutamate 5-kinase (262 aa).

Lys14 contacts ATP. Ser54, Asp141, and Asn153 together coordinate substrate. ATP-binding positions include 173–174 (SD) and 214–220 (TGGMVTK).

It belongs to the glutamate 5-kinase family.

It is found in the cytoplasm. It catalyses the reaction L-glutamate + ATP = L-glutamyl 5-phosphate + ADP. The protein operates within amino-acid biosynthesis; L-proline biosynthesis; L-glutamate 5-semialdehyde from L-glutamate: step 1/2. Functionally, catalyzes the transfer of a phosphate group to glutamate to form L-glutamate 5-phosphate. The sequence is that of Glutamate 5-kinase from Symbiobacterium thermophilum (strain DSM 24528 / JCM 14929 / IAM 14863 / T).